The primary structure comprises 533 residues: Probable ribonuclease ZC3H12D (533 aa).

The 155-residue stretch at 92-246 folds into the RNase NYN domain; sequence LRPIVIDGSN…PLGRRGPTLS (155 aa). Residues 251–282 form a C3H1-type zinc finger; it reads KKPRPPEPSWQHCPYGKKCTYGVKCRFYHPER. The segment at 262-368 is necessary for interaction with ZC3H12A; the sequence is HCPYGKKCTY…ASGVVSQSRG (107 aa). The disordered stretch occupies residues 302–335; that stretch reads LGGGAEEPRTPSARSRPTTARLLPQEPGEHDLPP.

It belongs to the ZC3H12 family. In terms of assembly, interacts with ZC3H12A. Requires Mg(2+) as cofactor. As to expression, expressed at low levels in bone marrow derived macrophages.

It is found in the cytoplasm. The protein resides in the P-body. May regulate cell growth likely by suppressing RB1 phosphorylation. May function as RNase and regulate the levels of target RNA species (Potential). In association with ZC3H12A enhances the degradation of interleukin IL-6 mRNA level in activated macrophages. Serve as a tumor suppressor in certain leukemia cells. Overexpression inhibits the G1 to S phase progression through suppression of RB1 phosphorylation. This chain is Probable ribonuclease ZC3H12D, found in Mus musculus (Mouse).